A 312-amino-acid chain; its full sequence is tRNA uridine(34) hydroxylase (312 aa).

A Rhodanese domain is found at R130–L225. Catalysis depends on C185, which acts as the Cysteine persulfide intermediate.

Belongs to the TrhO family.

The enzyme catalyses uridine(34) in tRNA + AH2 + O2 = 5-hydroxyuridine(34) in tRNA + A + H2O. Catalyzes oxygen-dependent 5-hydroxyuridine (ho5U) modification at position 34 in tRNAs. This chain is tRNA uridine(34) hydroxylase, found in Corynebacterium diphtheriae (strain ATCC 700971 / NCTC 13129 / Biotype gravis).